Here is an 855-residue protein sequence, read N- to C-terminus: MSEARRDSTSSLQRKKPPWLKLDIPSAVPPTAEEPSFLQPLRRQAFLRSVSMPAETAHISSPHHELRRSVLQRQTSITQTIRRGTADWFGVSKDSDSTQKWQRKSIRHCSQRYGKLKPQVLRELDLPSQDNVSLTSTETPPPLYVGPCQLGMQKIIDPLARGRAFRVADDTAEGLSAPHTPVTPGAASLCSFSSSRSGFHRLPRRRKRESVAKMSFRAAAALMKGRSVRDGTLRRAQRRSFTPASFLEEDTTDFPDELDTSFFAREGILHEELSTYPDEVFESPSEAALKDWEKAPEQADLTGGALDRSELERSHLMLPLERGWRKQKEGAAAPQPKVRLRQEVVSTAGPRRGQRIAVPVRKLFAREKRPYGLGMVGRLTNRTYRKRIDSFVKRQIEDMDDHRPFFTYWLTFVHSLVTILAVCIYGIAPVGFSQHETVDSVLRNRGVYENVKYVQQENFWIGPSSEALIHLGAKFSPCMRQDPQVHSFIRSAREREKHSACCVRNDRSGCVQTSEEECSSTLAVWVKWPIHPSAPELAGHKRQFGSVCHQDPRVCDEPSSEDPHEWPEDITKWPICTKNSAGNHTNHPHMDCVITGRPCCIGTKGRCEITSREYCDFMRGYFHEEATLCSQVHCMDDVCGLLPFLNPEVPDQFYRLWLSLFLHAGILHCLVSICFQMTVLRDLEKLAGWHRIAIIYLLSGVTGNLASAIFLPYRAEVGPAGSQFGILACLFVELFQSWQILARPWRAFFKLLAVVLFLFTFGLLPWIDNFAHISGFISGLFLSFAFLPYISFGKFDLYRKRCQIIIFQVVFLGLLAGLVVLFYFYPVRCEWCEFLTCIPFTDKFCEKYELDAQLH.

Residues 1 to 36 (MSEARRDSTSSLQRKKPPWLKLDIPSAVPPTAEEPS) form a disordered region. Residues 1 to 411 (MSEARRDSTS…HRPFFTYWLT (411 aa)) lie on the Cytoplasmic side of the membrane. Ser76 and Ser176 each carry phosphoserine. 2 positions are modified to phosphothreonine: Thr180 and Thr183. Ser390 carries the post-translational modification Phosphoserine. A helical transmembrane segment spans residues 412 to 432 (FVHSLVTILAVCIYGIAPVGF). The Lumenal segment spans residues 433 to 655 (SQHETVDSVL…NPEVPDQFYR (223 aa)). The N-linked (GlcNAc...) asparagine glycan is linked to Asn583. Residues 656–676 (LWLSLFLHAGILHCLVSICFQ) form a helical membrane-spanning segment. At 677-691 (MTVLRDLEKLAGWHR) the chain is on the cytoplasmic side. The chain crosses the membrane as a helical span at residues 692–712 (IAIIYLLSGVTGNLASAIFLP). The Lumenal portion of the chain corresponds to 713–714 (YR). The chain crosses the membrane as a helical span at residues 715–735 (AEVGPAGSQFGILACLFVELF). At 736 to 746 (QSWQILARPWR) the chain is on the cytoplasmic side. The chain crosses the membrane as a helical span at residues 747-767 (AFFKLLAVVLFLFTFGLLPWI). Topologically, residues 768-772 (DNFAH) are lumenal. The helical transmembrane segment at 773-793 (ISGFISGLFLSFAFLPYISFG) threads the bilayer. Topologically, residues 794–803 (KFDLYRKRCQ) are cytoplasmic. A helical membrane pass occupies residues 804-824 (IIIFQVVFLGLLAGLVVLFYF). Residues 825-855 (YPVRCEWCEFLTCIPFTDKFCEKYELDAQLH) lie on the Lumenal side of the membrane.

It belongs to the peptidase S54 family. In terms of assembly, homodimer, or homooligomer. Interacts with TGFA and HBEGF. Interacts with EGF; may retain EGF in the endoplasmic reticulum and regulates its degradation through the endoplasmic reticulum-associated degradation (ERAD). Interacts (via cytoplasmic N-terminus) with FRMD8/iTAP; this interaction leads to mutual protein stabilization. Interacts with ADAM17/TACE.

It is found in the endoplasmic reticulum membrane. Its subcellular location is the golgi apparatus membrane. In terms of biological role, regulates ADAM17 protease, a sheddase of the epidermal growth factor (EGF) receptor ligands and TNF, thereby plays a role in sleep, cell survival, proliferation, migration and inflammation. Does not exhibit any protease activity on its own. The sequence is that of Inactive rhomboid protein 1 (RHBDF1) from Papio anubis (Olive baboon).